A 366-amino-acid chain; its full sequence is tRNA/tmRNA (uracil-C(5))-methyltransferase (366 aa).

Residues Q190, Y218, N223, E239, and D299 each coordinate S-adenosyl-L-methionine. C324 functions as the Nucleophile in the catalytic mechanism. E358 acts as the Proton acceptor in catalysis.

This sequence belongs to the class I-like SAM-binding methyltransferase superfamily. RNA M5U methyltransferase family. TrmA subfamily.

The enzyme catalyses uridine(54) in tRNA + S-adenosyl-L-methionine = 5-methyluridine(54) in tRNA + S-adenosyl-L-homocysteine + H(+). It catalyses the reaction uridine(341) in tmRNA + S-adenosyl-L-methionine = 5-methyluridine(341) in tmRNA + S-adenosyl-L-homocysteine + H(+). Its function is as follows. Dual-specificity methyltransferase that catalyzes the formation of 5-methyluridine at position 54 (m5U54) in all tRNAs, and that of position 341 (m5U341) in tmRNA (transfer-mRNA). The sequence is that of tRNA/tmRNA (uracil-C(5))-methyltransferase from Salmonella paratyphi C (strain RKS4594).